A 300-amino-acid polypeptide reads, in one-letter code: Homoserine kinase (300 aa).

86–96 is a binding site for ATP; it reads PVARGLGSSAT.

It belongs to the GHMP kinase family. Homoserine kinase subfamily.

Its subcellular location is the cytoplasm. It catalyses the reaction L-homoserine + ATP = O-phospho-L-homoserine + ADP + H(+). It functions in the pathway amino-acid biosynthesis; L-threonine biosynthesis; L-threonine from L-aspartate: step 4/5. Functionally, catalyzes the ATP-dependent phosphorylation of L-homoserine to L-homoserine phosphate. This Persephonella marina (strain DSM 14350 / EX-H1) protein is Homoserine kinase.